Here is a 38-residue protein sequence, read N- to C-terminus: Histone H5 (38 aa).

Over residues 1–15 (TESPIPVPAPAPAAK) the composition is skewed to pro residues. Residues 1-38 (TESPIPVPAPAPAAKPKPKRVSKRPASHPPYSDMIAAA) are disordered. The span at 16–26 (PKPKRVSKRPA) shows a compositional bias: basic residues.

Belongs to the histone H1/H5 family. Erythroid cells.

The protein localises to the nucleus. Its subcellular location is the chromosome. Functionally, histone H5 performs the same function as H1, being necessary for the condensation of nucleosome chains into higher order structures, and replaces histone H1 in certain cells. This is Histone H5 from Columba livia (Rock dove).